A 608-amino-acid chain; its full sequence is UvrABC system protein C (608 aa).

Residues 13–91 (HDPGVYRMFD…IKTFQPRYNV (79 aa)) form the GIY-YIG domain. The 36-residue stretch at 201 to 236 (QQVLDHLIAKMETASRALDFENAARFRDQIQAVRAV) folds into the UVR domain.

The protein belongs to the UvrC family. In terms of assembly, interacts with UvrB in an incision complex.

The protein localises to the cytoplasm. Its function is as follows. The UvrABC repair system catalyzes the recognition and processing of DNA lesions. UvrC both incises the 5' and 3' sides of the lesion. The N-terminal half is responsible for the 3' incision and the C-terminal half is responsible for the 5' incision. The chain is UvrABC system protein C from Actinobacillus succinogenes (strain ATCC 55618 / DSM 22257 / CCUG 43843 / 130Z).